Here is a 192-residue protein sequence, read N- to C-terminus: Anthranilate synthase component 2 (192 aa).

Residues 3–192 (NILLLDNIDS…LQRVIQWTKI (190 aa)) enclose the Glutamine amidotransferase type-1 domain. Position 57-59 (57-59 (GPG)) interacts with L-glutamine. The active-site Nucleophile; for GATase activity is cysteine 84. L-glutamine is bound by residues glutamine 88 and 134–135 (SL). Active-site for GATase activity residues include histidine 170 and glutamate 172.

Heterotetramer consisting of two non-identical subunits: a beta subunit (TrpG) and a large alpha subunit (TrpE).

The enzyme catalyses chorismate + L-glutamine = anthranilate + pyruvate + L-glutamate + H(+). The protein operates within amino-acid biosynthesis; L-tryptophan biosynthesis; L-tryptophan from chorismate: step 1/5. Its function is as follows. Part of a heterotetrameric complex that catalyzes the two-step biosynthesis of anthranilate, an intermediate in the biosynthesis of L-tryptophan. In the first step, the glutamine-binding beta subunit (TrpG) of anthranilate synthase (AS) provides the glutamine amidotransferase activity which generates ammonia as a substrate that, along with chorismate, is used in the second step, catalyzed by the large alpha subunit of AS (TrpE) to produce anthranilate. In the absence of TrpG, TrpE can synthesize anthranilate directly from chorismate and high concentrations of ammonia. The chain is Anthranilate synthase component 2 (trpG) from Buchnera aphidicola subsp. Baizongia pistaciae (strain Bp).